The following is a 236-amino-acid chain: 2-C-methyl-D-erythritol 4-phosphate cytidylyltransferase (236 aa).

It belongs to the IspD/TarI cytidylyltransferase family. IspD subfamily. Homodimer.

The catalysed reaction is 2-C-methyl-D-erythritol 4-phosphate + CTP + H(+) = 4-CDP-2-C-methyl-D-erythritol + diphosphate. Its pathway is isoprenoid biosynthesis; isopentenyl diphosphate biosynthesis via DXP pathway; isopentenyl diphosphate from 1-deoxy-D-xylulose 5-phosphate: step 2/6. Functionally, catalyzes the formation of 4-diphosphocytidyl-2-C-methyl-D-erythritol from CTP and 2-C-methyl-D-erythritol 4-phosphate (MEP). The chain is 2-C-methyl-D-erythritol 4-phosphate cytidylyltransferase from Escherichia coli O127:H6 (strain E2348/69 / EPEC).